The sequence spans 159 residues: Mediator of RNA polymerase II transcription subunit 10 (159 aa).

A disordered region spans residues 54–77 (STHTKPQPPSQDDEQKGSANDPLL).

This sequence belongs to the Mediator complex subunit 10 family. Component of the Mediator complex.

It localises to the nucleus. In terms of biological role, component of the Mediator complex, a coactivator involved in the regulated transcription of nearly all RNA polymerase II-dependent genes. Mediator functions as a bridge to convey information from gene-specific regulatory proteins to the basal RNA polymerase II transcription machinery. Mediator is recruited to promoters by direct interactions with regulatory proteins and serves as a scaffold for the assembly of a functional preinitiation complex with RNA polymerase II and the general transcription factors. The sequence is that of Mediator of RNA polymerase II transcription subunit 10 (nut2) from Aspergillus fumigatus (strain ATCC MYA-4609 / CBS 101355 / FGSC A1100 / Af293) (Neosartorya fumigata).